Consider the following 473-residue polypeptide: Trehalose-6-phosphate synthase (473 aa).

Arg-10 is a binding site for D-glucose 6-phosphate. Position 21–22 (21–22 (GG)) interacts with UDP-alpha-D-glucose. The D-glucose 6-phosphate site is built by Tyr-76 and Asp-130. Residues Arg-262 and Lys-267 each coordinate UDP-alpha-D-glucose. A D-glucose 6-phosphate-binding site is contributed by Arg-300. UDP-alpha-D-glucose contacts are provided by residues Phe-339 and 365–369 (LVAKE). Residues 454–473 (TPRSPERQQQNNVATFPKLA) are disordered.

This sequence belongs to the glycosyltransferase 20 family. Homotetramer.

The enzyme catalyses D-glucose 6-phosphate + UDP-alpha-D-glucose = alpha,alpha-trehalose 6-phosphate + UDP + H(+). It functions in the pathway glycan biosynthesis; trehalose biosynthesis. Its function is as follows. Probably involved in the osmoprotection via the biosynthesis of trehalose. Catalyzes the transfer of glucose from UDP-alpha-D-glucose (UDP-Glc) to D-glucose 6-phosphate (Glc-6-P) to form trehalose-6-phosphate. Acts with retention of the anomeric configuration of the UDP-sugar donor. The polypeptide is Trehalose-6-phosphate synthase (Salmonella paratyphi A (strain ATCC 9150 / SARB42)).